The primary structure comprises 333 residues: UbiA prenyltransferase domain-containing protein 1 (333 aa).

A disordered region spans residues asparagine 13–proline 33. The next 8 helical transmembrane spans lie at leucine 78–threonine 98, phenylalanine 129–threonine 149, leucine 155–phenylalanine 175, tyrosine 177–alanine 197, alanine 199–serine 219, isoleucine 240–leucine 260, leucine 265–isoleucine 285, and leucine 310–leucine 330.

This sequence belongs to the UbiA prenyltransferase family.

It localises to the endoplasmic reticulum membrane. The protein resides in the golgi apparatus membrane. The protein localises to the mitochondrion membrane. The catalysed reaction is menadiol + (2E,6E,10E)-geranylgeranyl diphosphate = menaquinol-4 + diphosphate. The enzyme catalyses all-trans-decaprenyl diphosphate + 4-hydroxybenzoate = 4-hydroxy-3-(all-trans-decaprenyl)benzoate + diphosphate. Its pathway is quinol/quinone metabolism; menaquinone biosynthesis. It participates in cofactor biosynthesis; ubiquinone biosynthesis. Prenyltransferase that mediates the formation of menaquinone-4 (MK-4) and coenzyme Q10. MK-4 is a vitamin K2 isoform required for endothelial cell development. Mediates the conversion of phylloquinone (PK) into MK-4, probably by cleaving the side chain of phylloquinone (PK) to release 2-methyl-1,4-naphthoquinone (menadione; K3) and then prenylating it with geranylgeranyl pyrophosphate (GGPP) to form MK-4. Also plays a role in cardiovascular development independently of MK-4 biosynthesis, by acting as a coenzyme Q10 biosynthetic enzyme: coenzyme Q10, also named ubiquinone, plays an important antioxidant role in the cardiovascular system. Mediates biosynthesis of coenzyme Q10 in the Golgi membrane, leading to protect cardiovascular tissues from NOS3/eNOS-dependent oxidative stress. The chain is UbiA prenyltransferase domain-containing protein 1 (UBIAD1) from Gallus gallus (Chicken).